Here is a 241-residue protein sequence, read N- to C-terminus: Carboxy-S-adenosyl-L-methionine synthase (241 aa).

S-adenosyl-L-methionine is bound by residues Tyr-38, Gly-63–Ser-65, Asp-88–Asn-89, Asp-116–Ile-117, Asn-131, and Arg-198.

Belongs to the class I-like SAM-binding methyltransferase superfamily. Cx-SAM synthase family. In terms of assembly, homodimer.

The catalysed reaction is prephenate + S-adenosyl-L-methionine = carboxy-S-adenosyl-L-methionine + 3-phenylpyruvate + H2O. Functionally, catalyzes the conversion of S-adenosyl-L-methionine (SAM) to carboxy-S-adenosyl-L-methionine (Cx-SAM). This Actinobacillus pleuropneumoniae serotype 3 (strain JL03) protein is Carboxy-S-adenosyl-L-methionine synthase.